Reading from the N-terminus, the 931-residue chain is GPI ethanolamine phosphate transferase 1 (931 aa).

Position 1 (M1) is a topological domain, cytoplasmic. A helical membrane pass occupies residues 2–24; it reads LLFFTLGLLIHFVFFASIFDIYF. Residues 25–442 lie on the Lumenal side of the membrane; sequence TSPLVHGMTP…SYYHTYDRFF (418 aa). N-linked (GlcNAc...) asparagine glycosylation is found at N128, N192, and N350. A helical transmembrane segment spans residues 443–463; that stretch reads LGVNVVIGFVGWISYASLLII. The Cytoplasmic portion of the chain corresponds to 464–482; it reads KSHSNLIKGVSKEVKKPSH. A helical membrane pass occupies residues 483–503; it reads LLPCSFVAIGILVAFFLLIQA. Topologically, residues 504–508 are lumenal; the sequence is CPWTY. The helical transmembrane segment at 509-529 threads the bilayer; the sequence is YVYGLLPLPIWYAVLREFQVI. Topologically, residues 530 to 543 are cytoplasmic; the sequence is QDLVVSVLTYPLSH. The chain crosses the membrane as a helical span at residues 544–564; sequence FVGYLLAFTLGIEVLVLSFFY. Position 565 (R565) is a topological domain, lumenal. The chain crosses the membrane as a helical span at residues 566 to 586; sequence YMLTAGLTAFAAWPFLTRLWT. Over 587–591 the chain is Cytoplasmic; sequence RAKMT. A helical transmembrane segment spans residues 592 to 612; that stretch reads SLSWTFFSLLLAVFPLMPVVG. Topologically, residues 613 to 618 are lumenal; that stretch reads RKPDIS. The chain crosses the membrane as a helical span at residues 619-639; it reads LVMGAGLLVLLLSLCVVTSLM. Residues 640–649 are Cytoplasmic-facing; it reads KRKDSFIKEE. Residues 650–670 form a helical membrane-spanning segment; the sequence is LLVHLLQVLSTVLSMYVVYST. The Lumenal portion of the chain corresponds to 671–685; sequence QSSLLRKQGLPLMNQ. Residues 686–706 form a helical membrane-spanning segment; it reads IISWATLASSLVVPLLSSPVL. At 707–723 the chain is on the cytoplasmic side; the sequence is FQRLFSILLSLMSTYLL. The chain crosses the membrane as a helical span at residues 724 to 744; that stretch reads LSTGYEALFPLVLSCLMFVWI. The Lumenal portion of the chain corresponds to 745 to 786; the sequence is NIEQETLQQSGVCCKQKLTSIQFSYNTDITQFRQLYLDDIRR. The chain crosses the membrane as a helical span at residues 787 to 807; that stretch reads AFFLVFFLVTAFFGTGNIASI. The Cytoplasmic segment spans residues 808-824; that stretch reads NSFDLASVYCFLTVFSP. The helical transmembrane segment at 825-845 threads the bilayer; that stretch reads FMMGALMMWKILIPFVLVMCA. Residues 846-858 are Lumenal-facing; it reads FEAVQLTTQLSSK. Residues 859-879 traverse the membrane as a helical segment; it reads SLFLIVLVISDIMALHFFFLV. At 880–894 the chain is on the cytoplasmic side; the sequence is KDYGSWLDIGTSISH. The chain crosses the membrane as a helical span at residues 895 to 915; sequence YVIVMSMTIFLVFLNGLAQLL. Residues 916–931 are Lumenal-facing; the sequence is TTKKLRLCGKPKSHFM.

The protein belongs to the PIGG/PIGN/PIGO family. PIGN subfamily.

Its subcellular location is the endoplasmic reticulum membrane. It functions in the pathway glycolipid biosynthesis; glycosylphosphatidylinositol-anchor biosynthesis. Ethanolamine phosphate transferase that catalyzes an ethanolamine phosphate (EtNP) transfer from phosphatidylethanolamine (PE) to the 2-OH position of the first alpha-1,4-linked mannose of the alpha-D-Man-(1-&gt;6)-alpha-D-Man-(1-&gt;4)-alpha-D-GlcN-(1-&gt;6)-(1-radyl,2-acyl-sn-glycero-3-phospho)-2-acyl-inositol (also termed H3) intermediate to generate an alpha-D-Man-(1-&gt;6)-2-PEtn-alpha-D-Man-(1-&gt;4)-alpha-D-GlcN-(1-&gt;6)-(1-radyl,2-acyl-sn-glycero-3-phospho)-2-acyl-inositol and participates in the eighth step of the glycosylphosphatidylinositol-anchor biosynthesis. May act as suppressor of replication stress and chromosome missegregation. The polypeptide is GPI ethanolamine phosphate transferase 1 (Homo sapiens (Human)).